The primary structure comprises 64 residues: Frontoxin IV (64 aa).

Intrachain disulfides connect cysteine 3-cysteine 24, cysteine 6-cysteine 11, cysteine 17-cysteine 41, cysteine 45-cysteine 57, and cysteine 58-cysteine 63.

In terms of tissue distribution, expressed by the venom gland.

The protein localises to the secreted. Produces peripheral paralysis by blocking neuromuscular transmission at the postsynaptic site. Binds to the muscular nicotinic acetylcholine receptor (nAChR). This chain is Frontoxin IV, found in Micrurus frontalis (Coral snake).